The sequence spans 185 residues: Ribosome-recycling factor (185 aa).

The protein belongs to the RRF family.

It localises to the cytoplasm. Functionally, responsible for the release of ribosomes from messenger RNA at the termination of protein biosynthesis. May increase the efficiency of translation by recycling ribosomes from one round of translation to another. The chain is Ribosome-recycling factor from Wolbachia sp. subsp. Drosophila simulans (strain wRi).